A 101-amino-acid polypeptide reads, in one-letter code: Small ribosomal subunit protein uS14 (101 aa).

A disordered region spans residues 48-69 (LSKLPRDSSPSRHRSRCELSGR). The segment covering 51-68 (LPRDSSPSRHRSRCELSG) has biased composition (basic and acidic residues).

It belongs to the universal ribosomal protein uS14 family. Part of the 30S ribosomal subunit. Contacts proteins S3 and S10.

Its function is as follows. Binds 16S rRNA, required for the assembly of 30S particles and may also be responsible for determining the conformation of the 16S rRNA at the A site. The protein is Small ribosomal subunit protein uS14 of Stenotrophomonas maltophilia (strain R551-3).